Reading from the N-terminus, the 127-residue chain is Putative adhesin P1-like protein MPN_203 (127 aa).

A disordered region spans residues 70–90; it reads TENFTQPQPQPQALKTTTPVF.

The protein belongs to the adhesin P1 family.

The chain is Putative adhesin P1-like protein MPN_203 from Mycoplasma pneumoniae (strain ATCC 29342 / M129 / Subtype 1) (Mycoplasmoides pneumoniae).